A 271-amino-acid chain; its full sequence is Phosphatidylglycerol--prolipoprotein diacylglyceryl transferase (271 aa).

Transmembrane regions (helical) follow at residues 21–41, 60–80, 95–115, 124–144, 176–196, 203–223, and 230–250; these read ISVR…MWLA, LLFA…VLFY, VWTG…AMLW, FFGV…VGRL, SQLY…NWFI, GSVS…VEYV, and LGLF…MIIG. Arginine 143 contributes to the a 1,2-diacyl-sn-glycero-3-phospho-(1'-sn-glycerol) binding site.

This sequence belongs to the Lgt family.

The protein localises to the cell inner membrane. The catalysed reaction is L-cysteinyl-[prolipoprotein] + a 1,2-diacyl-sn-glycero-3-phospho-(1'-sn-glycerol) = an S-1,2-diacyl-sn-glyceryl-L-cysteinyl-[prolipoprotein] + sn-glycerol 1-phosphate + H(+). Its pathway is protein modification; lipoprotein biosynthesis (diacylglyceryl transfer). Functionally, catalyzes the transfer of the diacylglyceryl group from phosphatidylglycerol to the sulfhydryl group of the N-terminal cysteine of a prolipoprotein, the first step in the formation of mature lipoproteins. The protein is Phosphatidylglycerol--prolipoprotein diacylglyceryl transferase of Vibrio vulnificus (strain CMCP6).